The primary structure comprises 55 residues: Large ribosomal subunit protein bL33 (55 aa).

It belongs to the bacterial ribosomal protein bL33 family.

The chain is Large ribosomal subunit protein bL33 from Novosphingobium aromaticivorans (strain ATCC 700278 / DSM 12444 / CCUG 56034 / CIP 105152 / NBRC 16084 / F199).